A 98-amino-acid chain; its full sequence is Post-transcriptional regulator ComN (98 aa).

In terms of assembly, interacts directly with DivIVA.

It is found in the cytoplasm. Functionally, required for post-transcription initiation control of the comE operon. Promotes the accumulation of its target comE mRNA to septal and polar sites. This is Post-transcriptional regulator ComN (comN) from Bacillus subtilis (strain 168).